The chain runs to 204 residues: GTP cyclohydrolase 1 (204 aa).

Residues Cys-93, His-96, and Cys-164 each coordinate Zn(2+).

The protein belongs to the GTP cyclohydrolase I family. Toroid-shaped homodecamer, composed of two pentamers of five dimers.

It catalyses the reaction GTP + H2O = 7,8-dihydroneopterin 3'-triphosphate + formate + H(+). The protein operates within cofactor biosynthesis; 7,8-dihydroneopterin triphosphate biosynthesis; 7,8-dihydroneopterin triphosphate from GTP: step 1/1. The chain is GTP cyclohydrolase 1 from Rhizobium meliloti (strain 1021) (Ensifer meliloti).